The following is a 106-amino-acid chain: Oncosphere antigen B (106 aa).

The 96-residue stretch at 11 to 106 folds into the Fibronectin type-III domain; it reads LPQHFRWSQV…QSELRSMCIK (96 aa).

The chain is Oncosphere antigen B (ONCB) from Hydatigena taeniaeformis (Feline tapeworm).